Here is a 604-residue protein sequence, read N- to C-terminus: Glutamine--fructose-6-phosphate aminotransferase [isomerizing] (604 aa).

Cysteine 2 (nucleophile; for GATase activity) is an active-site residue. The region spanning 2–216 is the Glutamine amidotransferase type-2 domain; it reads CGIVGYVGFR…DGDVVRLTRE (215 aa). SIS domains are found at residues 281–420 and 453–594; these read LALD…GRGA and VAEK…VDQP. The active-site For Fru-6P isomerization activity is the lysine 599.

Homodimer.

The protein localises to the cytoplasm. The catalysed reaction is D-fructose 6-phosphate + L-glutamine = D-glucosamine 6-phosphate + L-glutamate. Functionally, catalyzes the first step in hexosamine metabolism, converting fructose-6P into glucosamine-6P using glutamine as a nitrogen source. The protein is Glutamine--fructose-6-phosphate aminotransferase [isomerizing] of Thermus thermophilus (strain ATCC 27634 / DSM 579 / HB8).